Here is a 200-residue protein sequence, read N- to C-terminus: UPF0637 protein LCABL_14170 (200 aa).

It belongs to the UPF0637 family.

The protein is UPF0637 protein LCABL_14170 of Lacticaseibacillus casei (strain BL23) (Lactobacillus casei).